Here is a 359-residue protein sequence, read N- to C-terminus: MMIGKTRSLTFTSLFFLLVISLIVNSYIFNSLLIINIFLISSLISLVITKYGFKIISRLNLLQNIRSEGPSLHFNKTNTPTMGGIFIILPFLLLLLIVNNYVDSVGILLLFFCTISFFIIGFLDDYLSIANKKNAGLKSNEKFTLQALIAVLFIIFASQSNYINPLITISNNWNMDTNIVIFPICFLTLVGLSNAVNLTDGLDGLAAGCSAIVFFGLGTEIFIKGQKDLIIYGLISYAMSGLCIGFLKYNKYPAKIFMGDTGSLTIGAALGSISILTNSFFTLFIISGIFITEALSVMIQVSFFKITKKLFKKGKRVFLMTPIHHHFELKGIKEEKIVENFWKVNILLIVLGIVLKINL.

Helical transmembrane passes span 7–27 (RSLT…VNSY), 28–48 (IFNS…SLVI), 82–102 (MGGI…NNYV), 103–123 (DSVG…IGFL), 147–167 (ALIA…NPLI), 179–199 (IVIF…VNLT), 203–223 (DGLA…EIFI), 229–249 (LIIY…FLKY), 256–276 (IFMG…ISIL), and 337–357 (IVEN…VLKI).

It belongs to the glycosyltransferase 4 family. MraY subfamily. Mg(2+) serves as cofactor.

Its subcellular location is the cell inner membrane. The catalysed reaction is UDP-N-acetyl-alpha-D-muramoyl-L-alanyl-gamma-D-glutamyl-meso-2,6-diaminopimeloyl-D-alanyl-D-alanine + di-trans,octa-cis-undecaprenyl phosphate = di-trans,octa-cis-undecaprenyl diphospho-N-acetyl-alpha-D-muramoyl-L-alanyl-D-glutamyl-meso-2,6-diaminopimeloyl-D-alanyl-D-alanine + UMP. Its pathway is cell wall biogenesis; peptidoglycan biosynthesis. Catalyzes the initial step of the lipid cycle reactions in the biosynthesis of the cell wall peptidoglycan: transfers peptidoglycan precursor phospho-MurNAc-pentapeptide from UDP-MurNAc-pentapeptide onto the lipid carrier undecaprenyl phosphate, yielding undecaprenyl-pyrophosphoryl-MurNAc-pentapeptide, known as lipid I. The chain is Phospho-N-acetylmuramoyl-pentapeptide-transferase from Prochlorococcus marinus subsp. pastoris (strain CCMP1986 / NIES-2087 / MED4).